The following is a 304-amino-acid chain: NADH-cytochrome b5 reductase 2 (304 aa).

The helical transmembrane segment at 6 to 26 (GTPVVVAVAAVAATVLLLLLL) threads the bilayer. Positions 43-155 (QAKYPLPLVG…RGPNGLLVYK (113 aa)) constitute an FAD-binding FR-type domain. FAD is bound by residues 135–165 (DSMK…IKPD) and 174–209 (FAKH…KCYL).

It belongs to the flavoprotein pyridine nucleotide cytochrome reductase family. Requires FAD as cofactor.

Its subcellular location is the membrane. The catalysed reaction is 2 Fe(III)-[cytochrome b5] + NADH = 2 Fe(II)-[cytochrome b5] + NAD(+) + H(+). NADH-cytochrome b5 reductases are involved in desaturation and elongation of fatty acids, cholesterol biosynthesis and drug metabolism. This is NADH-cytochrome b5 reductase 2 (CYB5R2) from Gallus gallus (Chicken).